The sequence spans 835 residues: Phenylalanine--tRNA ligase beta subunit (835 aa).

The tRNA-binding domain maps to 44-160 (PATTGPLVLG…ESGQPGDDAR (117 aa)). Residues 419 to 494 (PTMPSITMPV…RLEGLEAIPT (76 aa)) enclose the B5 domain. D472, D478, E481, and E482 together coordinate Mg(2+). The FDX-ACB domain maps to 741–834 (SAFPALHQDI…AKERLGAEMR (94 aa)).

Belongs to the phenylalanyl-tRNA synthetase beta subunit family. Type 1 subfamily. Tetramer of two alpha and two beta subunits. The cofactor is Mg(2+).

It localises to the cytoplasm. It carries out the reaction tRNA(Phe) + L-phenylalanine + ATP = L-phenylalanyl-tRNA(Phe) + AMP + diphosphate + H(+). The protein is Phenylalanine--tRNA ligase beta subunit of Corynebacterium efficiens (strain DSM 44549 / YS-314 / AJ 12310 / JCM 11189 / NBRC 100395).